A 797-amino-acid chain; its full sequence is MDELAGGGGGGPGMAAPPRQQQGPGGNLGLSPGGNGAAGGGGPPASEGAGPAAGPELSRPQQYTIPGILHYIQHEWARFEMERAHWEVERAELQARIAFLQGERKGQENLKKDLVRRIKMLEYALKQERAKYHKLKYGTELNQGDLKMPTFESEETKDTEAPTAPQNSQLTWKQGRQLLRQYLQEVGYTDTILDVRSQRVRSLLGLSNSEPNGSVETKNLEQILNGGESPKQKGQEIKRSSGDVLETFNFLENADDSDEDEENDMIEGIPEGKDKHRMNKHKIGNEGLAADLTDDPDTEEALKEFDFLVTAEDGEGAGEARSSGDGTEWDKDDLSPTAEVWDVDQGLISKLKEQYKKERKGKKGVKRANRTKLYDMIADLGDDELPHIPSGIINQSRSASTRMTDHEGARAEEAEPITFPSGGGKSFIMGSDDVLLSVLGLGDLADLTVTNDADYSYDLPANKDAFRKTWNPKYTLRSHFDGVRALAFHPVEPVLVTASEDHTLKLWNLQKTVPAKKSASLDVEPIYTFRAHIGPVLSLAISSNGEQCFSGGIDATIQWWNMPSPSVDPYDTYEPNVLAGTLVGHTDAVWGLAYSGIKNQLLSCSADGTVRLWNPQEKLPCICTYNGDKKHGIPTSVDFIGCDPAHMVTSFNTGSAVIYDLETSQSLVILSSQVDSGLQSNNHINRVVSHPTLPVTITAHEDRHIKFFDNKTGKMIHSMVAHLDAVTSLAVDPNGIYLMSGSHDCSIRLWNLDSKTCVQEITAHRKKLDESIYDVAFHSSKAYIASAGADALAKVFV.

Residue Met-1 is modified to N-acetylmethionine. 2 stretches are compositionally biased toward gly residues: residues 1-13 (MDELAGGGGGGPG) and 23-43 (GPGGNLGLSPGGNGAAGGGGP). The disordered stretch occupies residues 1–60 (MDELAGGGGGGPGMAAPPRQQQGPGGNLGLSPGGNGAAGGGGPPASEGAGPAAGPELSRP). The span at 44 to 56 (PASEGAGPAAGPE) shows a compositional bias: low complexity. The tract at residues 71 to 79 (YIQHEWARF) is caveolin-binding. A coiled-coil region spans residues 77-136 (ARFEMERAHWEVERAELQARIAFLQGERKGQENLKKDLVRRIKMLEYALKQERAKYHKLK). Thr-150 is modified (phosphothreonine). The interval 166–183 (QNSQLTWKQGRQLLRQYL) is calmodulin-binding. Phosphoserine is present on residues Ser-202, Ser-214, and Ser-229. Disordered stretches follow at residues 224–278 (LNGG…KHRM) and 313–338 (DGEGAGEARSSGDGTEWDKDDLSPTA). Residues 230–241 (PKQKGQEIKRSS) are compositionally biased toward basic and acidic residues. Positions 253-265 (NADDSDEDEENDM) are enriched in acidic residues. 2 positions are modified to phosphoserine: Ser-257 and Ser-335. 6 WD repeats span residues 478-517 (SHFDGVRALAFHPVEPVLVTASEDHTLKLWNLQKTVPAKK), 531-570 (AHIGPVLSLAISSNGEQCFSGGIDATIQWWNMPSPSVDPY), 584-623 (GHTDAVWGLAYSGIKNQLLSCSADGTVRLWNPQEKLPCIC), 679-718 (QSNNHINRVVSHPTLPVTITAHEDRHIKFFDNKTGKMIHS), 721-760 (AHLDAVTSLAVDPNGIYLMSGSHDCSIRLWNLDSKTCVQE), and 767-797 (KLDESIYDVAFHSSKAYIASAGADALAKVFV).

Belongs to the WD repeat striatin family. Tetramerizes. Part of the core of STRIPAK complexes composed of PP2A catalytic and scaffolding subunits, the striatins (PP2A regulatory subunits), the striatin-associated proteins MOB4, STRIP1 and STRIP2, PDCD10 and members of the STE20 kinases, such as STK24 and STK26. The STRIPAK complex can be extended by adapter proteins such as SLMAP:SIKE1 or CTTNBP2NL. Interacts with CDC42BPB.

Its subcellular location is the cytoplasm. The protein localises to the membrane. Functionally, calmodulin-binding scaffolding protein which is the center of the striatin-interacting phosphatase and kinase (STRIPAK) complexes. STRIPAK complexes have critical roles in protein (de)phosphorylation and are regulators of multiple signaling pathways including Hippo, MAPK, nuclear receptor and cytoskeleton remodeling. Different types of STRIPAK complexes are involved in a variety of biological processes such as cell growth, differentiation, apoptosis, metabolism and immune regulation. The polypeptide is Striatin-3 (Homo sapiens (Human)).